The primary structure comprises 321 residues: MDSLTIVPPALLIISILMAVAFLTALERKIMGHMQLRKGPNIVGPLGLLQPFADGLKLITKELTLPLLATPTLFILAPTAALMLALAMWSPLPMPSPLADLNLGLLLLLAMSSLMVYSFLWSGWSSNSKYALMGAMRAVAQTISYEVTLAIIVLSIVLLSGGFSLHTLTVTQEPLYLALATWPSMMMWYTSTLAETNRAPFDLTEGESELVSGFNVEYSASPFALFFLAEYANIMLMNTLTTTLFLSPSTPTFLPALFTIALMSKALLLTMSFLWVRASYPRFRYDQLMHLLWKNFLPMTLTLCLWHSSVPMSMFGLPPMT.

Transmembrane regions (helical) follow at residues 6–26 (IVPP…LTAL), 67–87 (LLAT…LALA), 103–123 (LGLL…LWSG), 143–163 (ISYE…SGGF), 174–194 (PLYL…STLA), 220–240 (ASPF…MNTL), 256–276 (ALFT…FLWV), and 296–316 (FLPM…SMFG).

This sequence belongs to the complex I subunit 1 family.

Its subcellular location is the mitochondrion inner membrane. It carries out the reaction a ubiquinone + NADH + 5 H(+)(in) = a ubiquinol + NAD(+) + 4 H(+)(out). In terms of biological role, core subunit of the mitochondrial membrane respiratory chain NADH dehydrogenase (Complex I) that is believed to belong to the minimal assembly required for catalysis. Complex I functions in the transfer of electrons from NADH to the respiratory chain. The immediate electron acceptor for the enzyme is believed to be ubiquinone. This chain is NADH-ubiquinone oxidoreductase chain 1 (MT-ND1), found in Alligator mississippiensis (American alligator).